The following is a 147-amino-acid chain: Heavy metal-associated isoprenylated plant protein 27 (147 aa).

Residues 18–82 form the HMA domain; the sequence is FQKVEIKVKM…VMHRTGKKAE (65 aa). Residues Cys29 and Cys32 each contribute to the a metal cation site. Cysteine methyl ester is present on Cys144. Cys144 carries S-farnesyl cysteine lipidation. Residues 145 to 147 constitute a propeptide, removed in mature form; sequence TIM.

Belongs to the HIPP family. As to quaternary structure, interacts with UBP16. Interacts with ZHD11/HB29.

The protein resides in the membrane. Functionally, heavy-metal-binding protein. Binds cadmium. May be involved in cadmium transport and play a role in cadmium detoxification. The chain is Heavy metal-associated isoprenylated plant protein 27 from Arabidopsis thaliana (Mouse-ear cress).